A 903-amino-acid polypeptide reads, in one-letter code: Dual serine/threonine and tyrosine protein kinase (903 aa).

Residues 382-414 (ANRKQEEMKEMIVETLESMKEQLLEDAANLEFT) adopt a coiled-coil conformation. The 255-residue stretch at 627–881 (PKLGRELGRG…PLLGIVQPSL (255 aa)) folds into the Protein kinase domain. ATP is bound by residues 633-641 (LGRGQYGVV) and Lys-656. The active-site Proton acceptor is Asp-752.

Belongs to the protein kinase superfamily. Ser/Thr protein kinase family.

It is found in the cytoplasm. The protein localises to the cell membrane. It localises to the apical cell membrane. Its subcellular location is the basolateral cell membrane. The protein resides in the cell junction. It carries out the reaction L-seryl-[protein] + ATP = O-phospho-L-seryl-[protein] + ADP + H(+). It catalyses the reaction L-threonyl-[protein] + ATP = O-phospho-L-threonyl-[protein] + ADP + H(+). The enzyme catalyses L-tyrosyl-[protein] + ATP = O-phospho-L-tyrosyl-[protein] + ADP + H(+). Functionally, may act as a positive regulator of ERK phosphorylation downstream of fibroblast growth factor-receptor activation. May induce both caspase-dependent apoptosis and caspase-independent cell death. May play a role in the embryonic development. The protein is Dual serine/threonine and tyrosine protein kinase of Pimephales promelas (Fathead minnow).